Reading from the N-terminus, the 196-residue chain is FMN-dependent NADH:quinone oxidoreductase (196 aa).

S10 provides a ligand contact to FMN.

It belongs to the azoreductase type 1 family. Homodimer. FMN is required as a cofactor.

The catalysed reaction is 2 a quinone + NADH + H(+) = 2 a 1,4-benzosemiquinone + NAD(+). It catalyses the reaction N,N-dimethyl-1,4-phenylenediamine + anthranilate + 2 NAD(+) = 2-(4-dimethylaminophenyl)diazenylbenzoate + 2 NADH + 2 H(+). Functionally, quinone reductase that provides resistance to thiol-specific stress caused by electrophilic quinones. Its function is as follows. Also exhibits azoreductase activity. Catalyzes the reductive cleavage of the azo bond in aromatic azo compounds to the corresponding amines. In Cereibacter sphaeroides (strain ATCC 17023 / DSM 158 / JCM 6121 / CCUG 31486 / LMG 2827 / NBRC 12203 / NCIMB 8253 / ATH 2.4.1.) (Rhodobacter sphaeroides), this protein is FMN-dependent NADH:quinone oxidoreductase.